Reading from the N-terminus, the 148-residue chain is Large ribosomal subunit protein uL15 (148 aa).

Over residues 1–30 (MPSRLRKTRKLRGHVSHGHGRIGKHRKHPG) the composition is skewed to basic residues. A disordered region spans residues 1-37 (MPSRLRKTRKLRGHVSHGHGRIGKHRKHPGGRGNAGG). At H39 the chain carries (3S)-3-hydroxyhistidine. An N6-acetyllysine mark is found at K47 and K55. S68 carries the post-translational modification Phosphoserine. K110 is subject to N6-acetyllysine.

The protein belongs to the universal ribosomal protein uL15 family. In terms of assembly, component of the large ribosomal subunit. Post-translationally, hydroxylated on His-39 by MINA.

The protein localises to the cytoplasm. Functionally, component of the large ribosomal subunit. The ribosome is a large ribonucleoprotein complex responsible for the synthesis of proteins in the cell. In Mus musculus (Mouse), this protein is Large ribosomal subunit protein uL15 (Rpl27a).